Here is a 46-residue protein sequence, read N- to C-terminus: Large ribosomal subunit protein bL34 (46 aa).

Residues 25–46 (TASGRQVLRRRRAKGRYRLAVS) form a disordered region. Positions 31–46 (VLRRRRAKGRYRLAVS) are enriched in basic residues.

It belongs to the bacterial ribosomal protein bL34 family.

In Synechococcus sp. (strain JA-3-3Ab) (Cyanobacteria bacterium Yellowstone A-Prime), this protein is Large ribosomal subunit protein bL34.